Here is a 213-residue protein sequence, read N- to C-terminus: Pyridoxine/pyridoxamine 5'-phosphate oxidase (213 aa).

Residues 8 to 11 (RREY) and lysine 67 each bind substrate. FMN-binding positions include 62–67 (RIVLLK), 77–78 (FT), arginine 83, lysine 84, and glutamine 106. Positions 124, 128, and 132 each coordinate substrate. FMN-binding positions include 141 to 142 (QS) and tryptophan 186. Residue 192 to 194 (RLH) participates in substrate binding. Arginine 196 serves as a coordination point for FMN.

The protein belongs to the pyridoxamine 5'-phosphate oxidase family. As to quaternary structure, homodimer. FMN is required as a cofactor.

It catalyses the reaction pyridoxamine 5'-phosphate + O2 + H2O = pyridoxal 5'-phosphate + H2O2 + NH4(+). The catalysed reaction is pyridoxine 5'-phosphate + O2 = pyridoxal 5'-phosphate + H2O2. It functions in the pathway cofactor metabolism; pyridoxal 5'-phosphate salvage; pyridoxal 5'-phosphate from pyridoxamine 5'-phosphate: step 1/1. It participates in cofactor metabolism; pyridoxal 5'-phosphate salvage; pyridoxal 5'-phosphate from pyridoxine 5'-phosphate: step 1/1. Functionally, catalyzes the oxidation of either pyridoxine 5'-phosphate (PNP) or pyridoxamine 5'-phosphate (PMP) into pyridoxal 5'-phosphate (PLP). The protein is Pyridoxine/pyridoxamine 5'-phosphate oxidase of Shewanella sediminis (strain HAW-EB3).